A 272-amino-acid chain; its full sequence is MKNTGKRIDLIANRKPQXQRVLYELRDRLKRNQFILNXTNPDIVISIGGDGMLLSAFHKYENQLDKVRFIGLHTGHLGFYTDYRDFELDKLVTNLQLDTGARVSYPVLNVKVFLENGEVKIFRALNEASIRRSDRTMVADIVINGVPFERFRGDGLTVSTPTGSTAYNKSLGGAVLHPTIEALQLTEIASLNNRVYRTLGSSIIVPKKDKIELIPTRNDYHTISVDNSVYSFRNIERIEYQIDHHKIHFVATPSHTSFWNRVKDAFIGEVDE.

The active-site Proton acceptor is the D50. NAD(+) contacts are provided by residues D50–G51, N126–E127, R152, D154, T165–S170, and A189.

It belongs to the NAD kinase family. A divalent metal cation serves as cofactor.

The protein localises to the cytoplasm. The enzyme catalyses NAD(+) + ATP = ADP + NADP(+) + H(+). Its function is as follows. Involved in the regulation of the intracellular balance of NAD and NADP, and is a key enzyme in the biosynthesis of NADP. Catalyzes specifically the phosphorylation on 2'-hydroxyl of the adenosine moiety of NAD to yield NADP. The polypeptide is NAD kinase (Streptococcus pneumoniae serotype 19F (strain G54)).